Consider the following 316-residue polypeptide: Ribosomal RNA small subunit methyltransferase H (316 aa).

Residues 35 to 37, aspartate 55, phenylalanine 79, aspartate 101, and glutamine 108 each bind S-adenosyl-L-methionine; that span reads GGH.

Belongs to the methyltransferase superfamily. RsmH family.

It localises to the cytoplasm. It catalyses the reaction cytidine(1402) in 16S rRNA + S-adenosyl-L-methionine = N(4)-methylcytidine(1402) in 16S rRNA + S-adenosyl-L-homocysteine + H(+). Its function is as follows. Specifically methylates the N4 position of cytidine in position 1402 (C1402) of 16S rRNA. The sequence is that of Ribosomal RNA small subunit methyltransferase H from Vibrio campbellii (strain ATCC BAA-1116).